Consider the following 217-residue polypeptide: Peptide deformylase 1 (217 aa).

Residues cysteine 129 and histidine 171 each contribute to the Fe cation site. Glutamate 172 is a catalytic residue. Residue histidine 175 participates in Fe cation binding.

The protein belongs to the polypeptide deformylase family. Fe(2+) serves as cofactor.

The catalysed reaction is N-terminal N-formyl-L-methionyl-[peptide] + H2O = N-terminal L-methionyl-[peptide] + formate. Its function is as follows. Removes the formyl group from the N-terminal Met of newly synthesized proteins. Requires at least a dipeptide for an efficient rate of reaction. N-terminal L-methionine is a prerequisite for activity but the enzyme has broad specificity at other positions. The polypeptide is Peptide deformylase 1 (Bifidobacterium longum (strain NCC 2705)).